Reading from the N-terminus, the 543-residue chain is Glutamyl-tRNA(Gln) amidotransferase subunit A, chloroplastic/mitochondrial (543 aa).

Catalysis depends on charge relay system residues lysine 123 and serine 198. Serine 222 functions as the Acyl-ester intermediate in the catalytic mechanism.

Belongs to the amidase family. GatA subfamily. In terms of assembly, subunit of the heterotrimeric GatCAB amidotransferase (AdT) complex, composed of A, B and C subunits.

Its subcellular location is the mitochondrion. It localises to the plastid. The protein resides in the chloroplast stroma. The enzyme catalyses L-glutamyl-tRNA(Gln) + L-glutamine + ATP + H2O = L-glutaminyl-tRNA(Gln) + L-glutamate + ADP + phosphate + H(+). Its function is as follows. Allows the formation of correctly charged Gln-tRNA(Gln) through the transamidation of misacylated Glu-tRNA(Gln) in chloroplasts and mitochondria. The reaction takes place in the presence of glutamine and ATP through an activated gamma-phospho-Glu-tRNA(Gln). This is Glutamyl-tRNA(Gln) amidotransferase subunit A, chloroplastic/mitochondrial from Oryza sativa subsp. japonica (Rice).